Here is a 318-residue protein sequence, read N- to C-terminus: tRNA uridine(34) hydroxylase (318 aa).

A Rhodanese domain is found at 123 to 217 (EDDDTVIIDA…YGKDPETKGQ (95 aa)). C177 serves as the catalytic Cysteine persulfide intermediate.

This sequence belongs to the TrhO family.

It carries out the reaction uridine(34) in tRNA + AH2 + O2 = 5-hydroxyuridine(34) in tRNA + A + H2O. Its function is as follows. Catalyzes oxygen-dependent 5-hydroxyuridine (ho5U) modification at position 34 in tRNAs. This Staphylococcus aureus (strain bovine RF122 / ET3-1) protein is tRNA uridine(34) hydroxylase.